Here is a 320-residue protein sequence, read N- to C-terminus: HPr kinase/phosphorylase (320 aa).

Catalysis depends on residues histidine 139 and lysine 160. ATP is bound at residue 154–161; sequence GDSGVGKS. Position 161 (serine 161) interacts with Mg(2+). The Proton acceptor; for phosphorylation activity. Proton donor; for dephosphorylation activity role is filled by aspartate 178. The segment at 202–211 is important for the catalytic mechanism of both phosphorylation and dephosphorylation; that stretch reads MEIRGIGIID. Glutamate 203 is a Mg(2+) binding site. Arginine 244 is an active-site residue. Residues 265–270 form an important for the catalytic mechanism of dephosphorylation region; that stretch reads PVKTGR.

This sequence belongs to the HPrK/P family. As to quaternary structure, homohexamer. The cofactor is Mg(2+).

The enzyme catalyses [HPr protein]-L-serine + ATP = [HPr protein]-O-phospho-L-serine + ADP + H(+). It carries out the reaction [HPr protein]-O-phospho-L-serine + phosphate + H(+) = [HPr protein]-L-serine + diphosphate. In terms of biological role, catalyzes the ATP- as well as the pyrophosphate-dependent phosphorylation of a specific serine residue in HPr, a phosphocarrier protein of the phosphoenolpyruvate-dependent sugar phosphotransferase system (PTS). HprK/P also catalyzes the pyrophosphate-producing, inorganic phosphate-dependent dephosphorylation (phosphorolysis) of seryl-phosphorylated HPr (P-Ser-HPr). The two antagonistic activities of HprK/P are regulated by several intracellular metabolites, which change their concentration in response to the absence or presence of rapidly metabolisable carbon sources (glucose, fructose, etc.) in the growth medium. Therefore, by controlling the phosphorylation state of HPr, HPrK/P is a sensor enzyme that plays a major role in the regulation of carbon metabolism and sugar transport: it mediates carbon catabolite repression (CCR), and regulates PTS-catalyzed carbohydrate uptake and inducer exclusion. The sequence is that of HPr kinase/phosphorylase from Limosilactobacillus reuteri (strain DSM 20016) (Lactobacillus reuteri).